The primary structure comprises 512 residues: Probable multidrug resistance protein EmrY (512 aa).

Over 1-8 (MAITKSTP) the chain is Cytoplasmic. Residues 9–29 (APLTGGTLWCVTIALSLATFM) traverse the membrane as a helical segment. Residue Gln30 is a topological domain, periplasmic. The chain crosses the membrane as a helical span at residues 31–51 (MLDSTISNVAIPTISGFLGAS). Residues 52 to 53 (TD) lie on the Cytoplasmic side of the membrane. Residues 54–74 (EGTWVITSFGVANAIAIPVTG) traverse the membrane as a helical segment. Residues 75 to 84 (RLAQRIGELR) are Periplasmic-facing. The next 2 helical transmembrane spans lie at 85–105 (LFLL…LSTN) and 106–126 (LDVL…LIPL). The Periplasmic segment spans residues 127-141 (SQSLLLRNYPPEKRT). Residues 142–162 (FALALWSMTVIIAPICGPILG) traverse the membrane as a helical segment. Residues 163–172 (GYICDNFSWG) are Cytoplasmic-facing. A helical membrane pass occupies residues 173-193 (WIFLINVPMGIIVLTLCLTLL). Residues 194-204 (KGRETETSPVK) are Periplasmic-facing. Residues 205-225 (MNLPGLTLLVLGVGGLQIMLD) form a helical membrane-spanning segment. Topologically, residues 226 to 234 (KGRDLDWFN) are cytoplasmic. A helical membrane pass occupies residues 235-255 (SSTIIILTVVSVISLISLVIW). Over 256–273 (ESTSENPILDLSLFKSRN) the chain is Periplasmic. Residues 274-294 (FTIGIVSITCAYLFYSGAIVL) form a helical membrane-spanning segment. Residues 295 to 307 (MPQLLQETMGYNA) lie on the Cytoplasmic side of the membrane. The chain crosses the membrane as a helical span at residues 308–328 (IWAGLAYAPIGIMPLLISPLI). Topologically, residues 329–338 (GRYGNKIDMR) are periplasmic. The chain crosses the membrane as a helical span at residues 339–359 (LLVTFSFLMYAVCYYWRSVTF). Topologically, residues 360-364 (MPTID) are cytoplasmic. A helical transmembrane segment spans residues 365-385 (FTGIILPQFFQGFAVACFFLP). Over 386-486 (LTTISFSGLP…LSISANEIFR (101 aa)) the chain is Periplasmic. A helical transmembrane segment spans residues 487-507 (MAAIAFILLTVLVWFAKPPFT). At 508–512 (AKGVG) the chain is on the cytoplasmic side.

This sequence belongs to the major facilitator superfamily. EmrB family. Part of the tripartite efflux system EmrYK-TolC, which is composed of an inner membrane transporter, EmrY, a membrane fusion protein, EmrK, and an outer membrane component, TolC. The complex forms a large protein conduit and can translocate molecules across both the inner and outer membranes.

Its subcellular location is the cell inner membrane. Functionally, part of the tripartite efflux system EmrYK-TolC, which confers resistance to various drugs. This chain is Probable multidrug resistance protein EmrY (emrY), found in Escherichia coli (strain K12).